Here is a 91-residue protein sequence, read N- to C-terminus: Probable Fe(2+)-trafficking protein (91 aa).

It belongs to the Fe(2+)-trafficking protein family.

Could be a mediator in iron transactions between iron acquisition and iron-requiring processes, such as synthesis and/or repair of Fe-S clusters in biosynthetic enzymes. In Thiobacillus denitrificans (strain ATCC 25259 / T1), this protein is Probable Fe(2+)-trafficking protein.